A 616-amino-acid polypeptide reads, in one-letter code: Cleavage stimulation factor subunit 2 tau variant (616 aa).

An RRM domain is found at 16–94; sequence RSVFVGNIPY…RALRVDNAAS (79 aa). Disordered stretches follow at residues 203–241 and 262–418; these read GKSQ…QPQH and IPAP…SRAM. Composition is skewed to low complexity over residues 223–233 and 319–331; these read PGPNVLLNQQN and VTPG…GLLG. Thr320 carries the post-translational modification Phosphothreonine. Positions 368-381 are enriched in basic and acidic residues; the sequence is SGHDTRGPSSHEMR. One copy of the 1-1 repeat lies at 418-422; sequence METRA. A 9 X 5 AA tandem repeats of M-E-T-R-[AG] region spans residues 418 to 462; the sequence is METRAMETEVLETRVMERRGMETCAMETRGMEARGMDARGLEMRG. The 1-2; approximate repeat unit spans residues 423–427; that stretch reads METEV. Residues 428 to 432 form a 1-3; approximate repeat; the sequence is LETRV. The 1-4; approximate repeat unit spans residues 433–437; that stretch reads MERRG. One copy of the 1-5; approximate repeat lies at 438–442; it reads METCA. The 1-6 repeat unit spans residues 443–447; the sequence is METRG. The stretch at 448-452 is one 1-7; approximate repeat; the sequence is MEARG. Residues 453–457 form a 1-8; approximate repeat; it reads MDARG. One copy of the 1-9; approximate repeat lies at 458–462; it reads LEMRG. 4 repeat units span residues 505 to 509, 510 to 514, 515 to 519, and 520 to 524. Residues 505-549 form a 9 X 5 AA tandem repeats of G-[AT]-G-[MI]-Q region; the sequence is GAGMQGTGIQGTGMQGAGIQGGGMQGAGIQGVSIQGGGIQGGGIQ. Residues 525-529 form a 2-5; approximate repeat; it reads GGGMQ. One copy of the 2-6 repeat lies at 530-534; that stretch reads GAGIQ. One copy of the 2-7; approximate repeat lies at 535–539; that stretch reads GVSIQ. A 2-8; approximate repeat occupies 540–544; it reads GGGIQ. A disordered region spans residues 542-573; sequence GIQGGGIQGASKQGGSQPSSFSPGQSQVTPQD. One copy of the 2-9; approximate repeat lies at 545 to 549; that stretch reads GGGIQ. A compositionally biased stretch (low complexity) spans 550–568; the sequence is GASKQGGSQPSSFSPGQSQ. The residue at position 563 (Ser563) is a Phosphoserine.

The protein localises to the nucleus. In terms of biological role, may play a significant role in AAUAAA-independent mRNA polyadenylation in germ cells. Directly involved in the binding to pre-mRNAs. This chain is Cleavage stimulation factor subunit 2 tau variant (CSTF2T), found in Homo sapiens (Human).